Consider the following 91-residue polypeptide: Probable Fe(2+)-trafficking protein (91 aa).

The protein belongs to the Fe(2+)-trafficking protein family. In terms of assembly, monomer.

In terms of biological role, could be a mediator in iron transactions between iron acquisition and iron-requiring processes, such as synthesis and/or repair of Fe-S clusters in biosynthetic enzymes. This Escherichia coli O7:K1 (strain IAI39 / ExPEC) protein is Probable Fe(2+)-trafficking protein.